Here is a 60-residue protein sequence, read N- to C-terminus: UPF0181 protein ESA_01442 (60 aa).

This sequence belongs to the UPF0181 family.

In Cronobacter sakazakii (strain ATCC BAA-894) (Enterobacter sakazakii), this protein is UPF0181 protein ESA_01442.